A 1194-amino-acid chain; its full sequence is MEQDELLHQLVDPKSPINIESLLDTITALVNDCKIPVLMRMKSVDNFISRYERIVESVAALRMKATDFRQLKVIGRGAFGEVHLVRHTRTNTVYAMKMLNKDDMIKRADSAFFWEERDIMAHANSEWIVRLQYAFQDPRHLYMVMEYMPGGDLVNLMTSYEVSEKWTRFYTAEIVEALAALHNMGYIHRDVKPDNMLISRSGHIKLADFGTCVKMNSNGVVRCSTAVGTPDYISPEVLRNQGKDSEFGKEVDWWSVGVFIYEMLVGETPFYAEALVSTYANIMNHQTSLRFPDEPLISTQAKDIIKKFLSAAPERLGKNNVDEIRNHKFFKNDEWTFETLKDATPPIVPSLKSDDDTTHFEEIETRDRDNASDFQLPKTFNGNQLPFIGFTYSNEYSPVKKLLNGASSNGVQNGVENKPVVVQQPLTNGHSTGIPEEQYEEVVIELDSKKRELESLKDSISRTEIRAKLIETEKNSLSSKINDLERELKDNKERLRLGADSDTKVNELSVELRMSKEYNGEMENELSKFRDKCEQLKEDLRKKSGELAQEKNETQRVLQQKKNAEEAFAEIKRDHEMLQTREAEKSLQLKKALDERKENGAYQQSVAKATDAEWERKMQYYEKQLEQATDDRKREEQKRTAAEFDQSRVARKLAGIEANYELLQNDYTNMKEARKDLERDLQDVIAEKRRLEIRVEQLMDSRNTDERVLNLCQEELLESQEEAKYKEDGLRGKIDGIRNELENEKMKSQTLEENLIVADKERGMLKMEVQELMQRHKWEMANKEQNLKHIENQLEELKEHSRIESTEQESNDKKTIADLNKKLELEKAHKKAVINKLEEEMAKRQPLKKGDKGITKSALIKKEREIVGFKKCRTGRILMSLQQENQHLQQKMTEMYMDSEKQGEHFSYQMQEMSQLIETLRDELKEYKDEYPQRHSVNRYEDKRSLDSREGIPTSISHQNIQIDGWLSLRDMTKKSRKPKVVFKKKSDHQLTLFFQWTNYFVILNEYAFTIYTDEKHLNSVVLTIEAGAMAHVRHVTSADLRNVDDNQLPKIFHIMYDDTSSNSSRHASNSDLSICEPREEGWKRHDFQELSYHTRTYCDDCGKKLSDFIRPTPAFECKNCHYKTHKEHIAQGTITMCRYTGLSRELVLMGTHKEVCNQWVSQLRRFIEASRPANVSVSRVSSRRHVGGPGSSA.

In terms of domain architecture, Protein kinase spans 68-330 (FRQLKVIGRG…VDEIRNHKFF (263 aa)). Residues 74–82 (IGRGAFGEV) and Lys-97 contribute to the ATP site. The Proton acceptor role is filled by Asp-190. In terms of domain architecture, AGC-kinase C-terminal spans 331–402 (KNDEWTFETL…SNEYSPVKKL (72 aa)). Coiled-coil stretches lie at residues 436–844 (EEQY…MAKR) and 875–933 (GRIL…EYPQ). Residues 784–846 (EQNLKHIENQ…LEEEMAKRQP (63 aa)) form the RhoBD domain. The 211-residue stretch at 961–1171 (IQIDGWLSLR…SQLRRFIEAS (211 aa)) folds into the PH domain. The segment at 1085–1138 (RHDFQELSYHTRTYCDDCGKKLSDFIRPTPAFECKNCHYKTHKEHIAQGTITMC) adopts a Phorbol-ester/DAG-type zinc-finger fold.

Belongs to the protein kinase superfamily. AGC Ser/Thr protein kinase family. As to quaternary structure, interacts with rho-1. It depends on Mg(2+) as a cofactor.

The protein localises to the cytoplasm. It is found in the cytoskeleton. Its subcellular location is the cleavage furrow. The enzyme catalyses L-seryl-[protein] + ATP = O-phospho-L-seryl-[protein] + ADP + H(+). The catalysed reaction is L-threonyl-[protein] + ATP = O-phospho-L-threonyl-[protein] + ADP + H(+). Its activity is regulated as follows. Activated by rho-1 binding. In terms of biological role, negatively regulates mel-11 to relieve the inhibition of mlc-4, allowing contraction of the circumferentially oriented microfilaments in epidermal cells and thereby regulating myosin II contractility during spermathecal contraction, cleavage furrow contraction in early embryos, and embryonic elongation and morphogenesis. Required for P-cell migration. May also play a role in oocyte cellularization. The polypeptide is Rho-associated protein kinase let-502 (Caenorhabditis briggsae).